The primary structure comprises 350 residues: MTISPRDEQNRSVDLWFAYKVPKLTKDTDSDSATGYEYVYYDREIGSVQKSPNRMNNPKGALFYTLDSIFGDPGSTTGWILYNDEMPADADRSNNATLGHTKGVIAFDIASNSALWLLHSWPKYTSPSAPGVPTPLYGQTFLCVSLDLETAGKIAAQMALHQQPQVYLPRTAGLDHASPLYTLTQPLNASAPGDSDSLDFKTRGGAPFKVIAKNRKWGKDFWNDLVGPTLKADMDVETWIRGKIPPILDSDGVHKTYDIKFIDLRKLGAPWAWPETQDHAKWGITTTDDWVCVGDINRMVTQEKRGGGTIAFQDPQLWKALSQTDLIVPPPGKTEAQARAMIHRTHQPAD.

The protein belongs to the DNase II family.

The protein is Putative deoxyribonuclease-2 of Burkholderia pseudomallei (strain 1710b).